Consider the following 354-residue polypeptide: Glycerol-3-phosphate dehydrogenase [NAD(+)], glycosomal (354 aa).

Residues 15–20, F90, K118, and A150 each bind NAD(+); that span reads GSGAFG. Residue K118 participates in substrate binding. K203 (proton acceptor) is an active-site residue. The NAD(+) site is built by R267 and E293. Residue 267–268 participates in substrate binding; that stretch reads RN. The Microbody targeting signal motif lies at 352–354; sequence SKM.

It belongs to the NAD-dependent glycerol-3-phosphate dehydrogenase family.

It localises to the glycosome. The catalysed reaction is sn-glycerol 3-phosphate + NAD(+) = dihydroxyacetone phosphate + NADH + H(+). The sequence is that of Glycerol-3-phosphate dehydrogenase [NAD(+)], glycosomal (GPD) from Trypanosoma brucei rhodesiense.